Here is a 355-residue protein sequence, read N- to C-terminus: Putative [LysW]-L-2-aminoadipate/[LysW]-L-glutamate phosphate reductase (355 aa).

Ser13–Thr16 serves as a coordination point for NADP(+). Residue Cys153 is part of the active site. Asn323 serves as a coordination point for NADP(+).

This sequence belongs to the NAGSA dehydrogenase family. Type 1 subfamily. LysY sub-subfamily.

It is found in the cytoplasm. The catalysed reaction is [amino-group carrier protein]-C-terminal-N-(1-carboxy-5-oxopentan-1-yl)-L-glutamine + phosphate + NADP(+) = [amino-group carrier protein]-C-terminal-N-(1-carboxy-5-phosphooxy-5-oxopentan-1-yl)-L-glutamine + NADPH + H(+). It carries out the reaction [amino-group carrier protein]-C-terminal-gamma-(L-glutamyl-5-semialdehyde)-L-glutamate + phosphate + NADP(+) = [amino-group carrier protein]-C-terminal-gamma-(5-phospho-L-glutamyl)-L-glutamate + NADPH + H(+). The protein operates within amino-acid biosynthesis; L-lysine biosynthesis via AAA pathway; L-lysine from L-alpha-aminoadipate (Thermus route): step 3/5. It functions in the pathway amino-acid biosynthesis; L-arginine biosynthesis. In terms of biological role, involved in both the arginine and lysine biosynthetic pathways. The sequence is that of Putative [LysW]-L-2-aminoadipate/[LysW]-L-glutamate phosphate reductase from Aeropyrum pernix (strain ATCC 700893 / DSM 11879 / JCM 9820 / NBRC 100138 / K1).